The chain runs to 203 residues: Cupin-domain-containing oxidoreductase fogC (203 aa).

The interval 105–171 is cupin-like domain; it reads DFAPGVESPL…GNGTLPGRML (67 aa).

The protein belongs to the virC family.

It functions in the pathway secondary metabolite biosynthesis. In terms of biological role, cupin-domain-containing oxidoreductase; part of the gene cluster that mediates the biosynthesis of flavoglaucin and congeners (including aspergin, dihydroauroglaucin and auroglaucin), prenylated salicylaldehyde derivatives carrying a saturated or an unsaturated C-7 side chain. The PKS fogA releases the carboxylic acid (8E,10E,12E)-3,5,7-trihydroxytetradeca-8,10,12-trienoic acid as its product, as well as derivatives with one and two double bonds. FogA is indeed able to reduce the initial triketide, thus being at least partially responsible for the differently saturated heptyl side chains of flavoglaucin congeners. The oxidoreductases fogB, fogC and fogD modify the nascent polyketide in fogA-bound form and, together, fogA, fogB, fogC and fogD are necessary for the formation of the aromatic core and the cyclized PKS products are released as salicyl alcohols. In particular, fogB is responsible for oxidation of a hydroxyl group or reduction of remaining double bond(s) at the C-7 residue whereas fogD is probably involved in the reductive release of the modified PKS products. The cytochrome P450 monooxygenase fogE is then responsible for the hydroxylation at C-3 of the benzene ring. The fogE products are substrates of the prenyltransferase fogH and the prenylated benzyl alcohols are subsequently oxidized by the fogF to produce the final aryl aldehydes flavoglaucin and congeners. The short-chain dehydrogenase fogG does not seem to be involved in the biosynthesis of the prenylated salicylaldehyde derivatives. The sequence is that of Cupin-domain-containing oxidoreductase fogC from Aspergillus ruber (strain CBS 135680).